A 347-amino-acid polypeptide reads, in one-letter code: GMP reductase (347 aa).

108–131 contributes to the NADP(+) binding site; sequence ADFQKTKDIMALTDDLIFICVDIA. Residues G181 and G183 each contribute to the K(+) site. C186 acts as the Thioimidate intermediate in catalysis. 216-239 provides a ligand contact to NADP(+); that stretch reads IIGDGGCSCAGDVSKAFGGGADFV.

This sequence belongs to the IMPDH/GMPR family. GuaC type 1 subfamily. In terms of assembly, homotetramer.

It carries out the reaction IMP + NH4(+) + NADP(+) = GMP + NADPH + 2 H(+). In terms of biological role, catalyzes the irreversible NADPH-dependent deamination of GMP to IMP. It functions in the conversion of nucleobase, nucleoside and nucleotide derivatives of G to A nucleotides, and in maintaining the intracellular balance of A and G nucleotides. The sequence is that of GMP reductase from Aliivibrio salmonicida (strain LFI1238) (Vibrio salmonicida (strain LFI1238)).